Consider the following 197-residue polypeptide: Signal-regulatory protein delta (197 aa).

The N-terminal stretch at 1–29 is a signal peptide; the sequence is MPIPASPLHPPLPSLLLYLLLELAGVTHV. The Ig-like V-type domain occupies 31–135; the sequence is HVQQTEMSQT…IKEYQSGRGT (105 aa). C51 and C117 are joined by a disulfide. Positions 139-158 are disordered; that stretch reads VTEQNPRPPKNRPAGRAGSR. The N-linked (GlcNAc...) asparagine glycan is linked to N174.

The protein resides in the secreted. The chain is Signal-regulatory protein delta (SIRPD) from Homo sapiens (Human).